The chain runs to 319 residues: tRNA uridine(34) hydroxylase (319 aa).

In terms of domain architecture, Rhodanese spans 133–231 (EDPNSVVIDT…YLEDVSSENS (99 aa)). C191 serves as the catalytic Cysteine persulfide intermediate.

Belongs to the TrhO family.

It catalyses the reaction uridine(34) in tRNA + AH2 + O2 = 5-hydroxyuridine(34) in tRNA + A + H2O. Its function is as follows. Catalyzes oxygen-dependent 5-hydroxyuridine (ho5U) modification at position 34 in tRNAs. The chain is tRNA uridine(34) hydroxylase from Prochlorococcus marinus (strain NATL2A).